We begin with the raw amino-acid sequence, 246 residues long: Polyhedrin (246 aa).

Belongs to the polyhedrin family.

In terms of biological role, major component of the virus occlusion bodies, which are large proteinaceous structures (polyhedra), that protect the virus from the outside environment for extended periods until they are ingested by insect larvae. The sequence is that of Polyhedrin (PH) from Lepidoptera (butterflies and moths).